The following is a 130-amino-acid chain: Small ribosomal subunit protein uS9 (130 aa).

Positions 105–130 are disordered; that stretch reads TRDARMKERKKPGLKKARKASQFSKR. Basic residues predominate over residues 111-130; that stretch reads KERKKPGLKKARKASQFSKR.

This sequence belongs to the universal ribosomal protein uS9 family.

This Lactiplantibacillus plantarum (strain ATCC BAA-793 / NCIMB 8826 / WCFS1) (Lactobacillus plantarum) protein is Small ribosomal subunit protein uS9.